The chain runs to 458 residues: Phosphoglucosamine mutase (458 aa).

Ser-100 functions as the Phosphoserine intermediate in the catalytic mechanism. Mg(2+)-binding residues include Ser-100, Asp-239, Asp-241, and Asp-243. Ser-100 bears the Phosphoserine mark.

This sequence belongs to the phosphohexose mutase family. The cofactor is Mg(2+). In terms of processing, activated by phosphorylation.

It carries out the reaction alpha-D-glucosamine 1-phosphate = D-glucosamine 6-phosphate. Functionally, catalyzes the conversion of glucosamine-6-phosphate to glucosamine-1-phosphate. This Dictyoglomus thermophilum (strain ATCC 35947 / DSM 3960 / H-6-12) protein is Phosphoglucosamine mutase.